We begin with the raw amino-acid sequence, 87 residues long: Hemocyanin alpha chain (87 aa).

The protein belongs to the tyrosinase family. Hemocyanin subfamily. As to quaternary structure, polymer that contains six different types of chains (alpha, beta, gamma, delta, epsilon, and zeta). In terms of tissue distribution, hemolymph.

The protein localises to the secreted. Its subcellular location is the extracellular space. In terms of biological role, hemocyanins are copper-containing oxygen carriers occurring freely dissolved in the hemolymph of many mollusks and arthropods. The chain is Hemocyanin alpha chain from Tachypleus tridentatus (Japanese horseshoe crab).